The chain runs to 151 residues: 3-hydroxyacyl-[acyl-carrier-protein] dehydratase FabZ (151 aa).

His54 is an active-site residue.

The protein belongs to the thioester dehydratase family. FabZ subfamily.

The protein resides in the cytoplasm. The enzyme catalyses a (3R)-hydroxyacyl-[ACP] = a (2E)-enoyl-[ACP] + H2O. Its function is as follows. Involved in unsaturated fatty acids biosynthesis. Catalyzes the dehydration of short chain beta-hydroxyacyl-ACPs and long chain saturated and unsaturated beta-hydroxyacyl-ACPs. The chain is 3-hydroxyacyl-[acyl-carrier-protein] dehydratase FabZ from Buchnera aphidicola subsp. Acyrthosiphon pisum (strain 5A).